We begin with the raw amino-acid sequence, 368 residues long: MNIAIIYGGKSSEHEVSLQSASSIIRTIDKKHKLHLIGISKNGAWYLHGDEERERIIKNEKAVLKIKKDEAKRVTVIPGGGAKKGLKAGDEFLPTDAVFAVLHGRFGEDGTIQGLFEMADLPYVGGDVMSTSISMDKEKTKMIWDYSGLPIVPYIAIKRQDWDDPEKKKAILARAEKDLEYPLFIKPCRAGSSVGAGMVKNRNELLEQAEESFLWDNKILVEACIEAREVECSVTGNTKTVAYIPGEIIPTHKFYDYEAKYTDPNGAELKIPADLNETQRKTIRETAIKAYEALDLSGLSRVDFFIDKRTGKIYLNEVNTIPGFTAISMFPKMCGASGLPYNELIMHLIELAIDRFKTDRKLKTCRQS.

In terms of domain architecture, ATP-grasp spans 141–350 (KMIWDYSGLP…YNELIMHLIE (210 aa)). 176-231 (EKDLEYPLFIKPCRAGSSVGAGMVKNRNELLEQAEESFLWDNKILVEACIEAREVE) contributes to the ATP binding site. The Mg(2+) site is built by Asp-303, Glu-317, and Asn-319.

It belongs to the D-alanine--D-alanine ligase family. Mg(2+) is required as a cofactor. The cofactor is Mn(2+).

The protein localises to the cytoplasm. The enzyme catalyses 2 D-alanine + ATP = D-alanyl-D-alanine + ADP + phosphate + H(+). It functions in the pathway cell wall biogenesis; peptidoglycan biosynthesis. In terms of biological role, cell wall formation. This Treponema denticola (strain ATCC 35405 / DSM 14222 / CIP 103919 / JCM 8153 / KCTC 15104) protein is D-alanine--D-alanine ligase.